Here is a 79-residue protein sequence, read N- to C-terminus: Small ribosomal subunit protein bS21A (79 aa).

Positions 57–79 (LARKKLQREGLLPAPKKVLRPTR) are disordered.

It belongs to the bacterial ribosomal protein bS21 family.

The chain is Small ribosomal subunit protein bS21A from Rhizobium johnstonii (strain DSM 114642 / LMG 32736 / 3841) (Rhizobium leguminosarum bv. viciae).